A 141-amino-acid chain; its full sequence is Nucleoside diphosphate kinase (141 aa).

6 residues coordinate ATP: Lys-11, Phe-59, Arg-87, Thr-93, Arg-104, and Asn-114. His-117 acts as the Pros-phosphohistidine intermediate in catalysis.

The protein belongs to the NDK family. In terms of assembly, homotetramer. Mg(2+) is required as a cofactor.

It localises to the cytoplasm. It catalyses the reaction a 2'-deoxyribonucleoside 5'-diphosphate + ATP = a 2'-deoxyribonucleoside 5'-triphosphate + ADP. The enzyme catalyses a ribonucleoside 5'-diphosphate + ATP = a ribonucleoside 5'-triphosphate + ADP. In terms of biological role, major role in the synthesis of nucleoside triphosphates other than ATP. The ATP gamma phosphate is transferred to the NDP beta phosphate via a ping-pong mechanism, using a phosphorylated active-site intermediate. The polypeptide is Nucleoside diphosphate kinase (Herminiimonas arsenicoxydans).